Reading from the N-terminus, the 761-residue chain is MEGPEITFAEAMLDNGRFGARTVRFETGRIAQQAQGAVAAYLDEETMLLSATSASKHPKDNFDFFPLTVDVEERSYAAGKIPGSFFRREGRPSTEAILVCRLIDRPLRPSFVDGLRNEVQIVVTVLSIAPDEFYDALAINAASASTQISGLPFSGPIAGVRLALIPGNGAHEDQWVAFPKASQLEEAVFDLIVVGRVLTNEDGTEGDVAIMMVEAEATEGSWNLIQGGAVKPNEEVVAQGLEAAKPFIRQLVGAQAALAKQSAKAIADYPVFLPYSQETYDSVAALAYDELVNVYQIADKVERQNADDALKERVKAALAEKAQAGALDAEALTQFSAAYKSVSKVVMRGRVLREGVRIDGRGLTDIRPLDAEVQIIPRVHGSAVFQRGETQILGVTTLNMLKMEQQIDSLSPVTKKRYLHHYNFPPYSTGETGRVGSPKRREIGHGFLAERALVPVLPSREEFPYAIRQVSEALSSNGSTSMGSVCASTLSLLNAGVPLRAPVAGIAMGLISDVIDGETRYAALTDILGAEDALGDMDFKVAGTSEFVTAIQLDTKLDGIPSSVLASALKQAKDARTTILSVLDAAIDAPDEMAPTAPRVISVQIPVDKIGELIGPKGKTINAIQDETGADISIDEDGTVYIGAVDGPSAEAARAQVNVIANPTNPEVGEQFLGTVVKNAAFGAFVSLLPGKDGLLHISEVRKLAGGKRVESVDDVLSIGQKILVEITKIDDRGKLSLAPVLADEAETHGHDAASEGPTEG.

Mg(2+)-binding residues include aspartate 532 and aspartate 538. In terms of domain architecture, KH spans 598 to 657; it reads PRVISVQIPVDKIGELIGPKGKTINAIQDETGADISIDEDGTVYIGAVDGPSAEAARAQV. An S1 motif domain is found at 669-741; the sequence is GEQFLGTVVK…DRGKLSLAPV (73 aa).

This sequence belongs to the polyribonucleotide nucleotidyltransferase family. The cofactor is Mg(2+).

The protein resides in the cytoplasm. It carries out the reaction RNA(n+1) + phosphate = RNA(n) + a ribonucleoside 5'-diphosphate. Involved in mRNA degradation. Catalyzes the phosphorolysis of single-stranded polyribonucleotides processively in the 3'- to 5'-direction. The chain is Polyribonucleotide nucleotidyltransferase from Leifsonia xyli subsp. xyli (strain CTCB07).